Reading from the N-terminus, the 189-residue chain is Ras-like protein 1 (189 aa).

10–17 provides a ligand contact to GTP; it reads GAGGVGKS. Positions 32 to 40 match the Effector region motif; it reads YDPTIEDSY. GTP contacts are provided by residues 57-61 and 116-119; these read DTAGQ and NKCD. The residue at position 186 (C186) is a Cysteine methyl ester. Residue C186 is the site of S-geranylgeranyl cysteine attachment. The propeptide at 187 to 189 is removed in mature form; it reads KML.

Belongs to the small GTPase superfamily. Ras family.

It is found in the cell membrane. It catalyses the reaction GTP + H2O = GDP + phosphate + H(+). Alternates between an inactive form bound to GDP and an active form bound to GTP. Activated by a guanine nucleotide-exchange factor (GEF) and inactivated by a GTPase-activating protein (GAP). Its function is as follows. Ras proteins bind GDP/GTP and possess intrinsic GTPase activity. Plays a role in eye development by regulating cell growth, survival of postmitotic ommatidial cells and differentiation of photoreceptor cells. During larval development, mediates Ptth/tor signaling leading to the production of ecdysone, a hormone required for the initiation of metamorphosis. The sequence is that of Ras-like protein 1 from Drosophila ananassae (Fruit fly).